The primary structure comprises 381 residues: Flap endonuclease 1 (381 aa).

An N-domain region spans residues 1 to 105; that stretch reads MGVKGLNQLI…GELEKRLLKR (105 aa). Asp34 lines the Mg(2+) pocket. Residues Arg47 and Arg71 each contribute to the DNA site. 5 residues coordinate Mg(2+): Asp87, Glu159, Glu161, Asp180, and Asp182. Positions 123-254 are I-domain; that stretch reads EVMKFEKRLV…VTAYKLIKEH (132 aa). Position 159 (Glu159) interacts with DNA. DNA is bound by residues Gly232 and Asp234. Asp234 lines the Mg(2+) pocket. The interval 340 to 348 is interaction with PCNA; that stretch reads VQGRLDGFF. A disordered region spans residues 354-381; the sequence is PGAKAGDKKGDKKRGSDSKASNNKKKRK. Over residues 358-370 the composition is skewed to basic and acidic residues; that stretch reads AGDKKGDKKRGSD.

Belongs to the XPG/RAD2 endonuclease family. FEN1 subfamily. As to quaternary structure, interacts with PCNA. Three molecules of FEN1 bind to one PCNA trimer with each molecule binding to one PCNA monomer. PCNA stimulates the nuclease activity without altering cleavage specificity. Mg(2+) is required as a cofactor. Phosphorylated. Phosphorylation upon DNA damage induces relocalization to the nuclear plasma.

It localises to the nucleus. The protein resides in the nucleolus. It is found in the nucleoplasm. The protein localises to the mitochondrion. In terms of biological role, structure-specific nuclease with 5'-flap endonuclease and 5'-3' exonuclease activities involved in DNA replication and repair. During DNA replication, cleaves the 5'-overhanging flap structure that is generated by displacement synthesis when DNA polymerase encounters the 5'-end of a downstream Okazaki fragment. It enters the flap from the 5'-end and then tracks to cleave the flap base, leaving a nick for ligation. Also involved in the long patch base excision repair (LP-BER) pathway, by cleaving within the apurinic/apyrimidinic (AP) site-terminated flap. Acts as a genome stabilization factor that prevents flaps from equilibrating into structures that lead to duplications and deletions. Also possesses 5'-3' exonuclease activity on nicked or gapped double-stranded DNA, and exhibits RNase H activity. Also involved in replication and repair of rDNA and in repairing mitochondrial DNA. This chain is Flap endonuclease 1, found in Scheffersomyces stipitis (strain ATCC 58785 / CBS 6054 / NBRC 10063 / NRRL Y-11545) (Yeast).